Consider the following 296-residue polypeptide: Nitrogenase iron protein (296 aa).

An ATP-binding site is contributed by 12-19 (GKGGIGKS). Residue Cys-100 coordinates [4Fe-4S] cluster. Arg-103 is modified (ADP-ribosylarginine; by dinitrogenase reductase ADP-ribosyltransferase). Cys-134 is a [4Fe-4S] cluster binding site.

It belongs to the NifH/BchL/ChlL family. Homodimer. [4Fe-4S] cluster serves as cofactor. The reversible ADP-ribosylation of Arg-103 inactivates the nitrogenase reductase and regulates nitrogenase activity.

The catalysed reaction is N2 + 8 reduced [2Fe-2S]-[ferredoxin] + 16 ATP + 16 H2O = H2 + 8 oxidized [2Fe-2S]-[ferredoxin] + 2 NH4(+) + 16 ADP + 16 phosphate + 6 H(+). In terms of biological role, the key enzymatic reactions in nitrogen fixation are catalyzed by the nitrogenase complex, which has 2 components: the iron protein and the molybdenum-iron protein. In Acidithiobacillus ferrooxidans (strain ATCC 23270 / DSM 14882 / CIP 104768 / NCIMB 8455) (Ferrobacillus ferrooxidans (strain ATCC 23270)), this protein is Nitrogenase iron protein.